We begin with the raw amino-acid sequence, 242 residues long: Lactate utilization protein A 2 (242 aa).

It belongs to the LutA/YkgE family.

Functionally, is involved in L-lactate degradation and allows cells to grow with lactate as the sole carbon source. The sequence is that of Lactate utilization protein A 2 from Bacillus cereus (strain Q1).